Here is a 156-residue protein sequence, read N- to C-terminus: Small ribosomal subunit protein uS7 (156 aa).

Belongs to the universal ribosomal protein uS7 family. Part of the 30S ribosomal subunit. Contacts proteins S9 and S11.

Functionally, one of the primary rRNA binding proteins, it binds directly to 16S rRNA where it nucleates assembly of the head domain of the 30S subunit. Is located at the subunit interface close to the decoding center, probably blocks exit of the E-site tRNA. In Salinispora tropica (strain ATCC BAA-916 / DSM 44818 / JCM 13857 / NBRC 105044 / CNB-440), this protein is Small ribosomal subunit protein uS7.